The chain runs to 130 residues: Holo-[acyl-carrier-protein] synthase (130 aa).

Positions 9 and 58 each coordinate Mg(2+).

The protein belongs to the P-Pant transferase superfamily. AcpS family. It depends on Mg(2+) as a cofactor.

It localises to the cytoplasm. It carries out the reaction apo-[ACP] + CoA = holo-[ACP] + adenosine 3',5'-bisphosphate + H(+). Functionally, transfers the 4'-phosphopantetheine moiety from coenzyme A to a Ser of acyl-carrier-protein. The sequence is that of Holo-[acyl-carrier-protein] synthase from Mycolicibacterium smegmatis (strain ATCC 700084 / mc(2)155) (Mycobacterium smegmatis).